Consider the following 294-residue polypeptide: MHPRFQTAFAQLADNLQSALAPILAGHHFPAMLTAEQVSTLKNTAGLDEDALAFALLPLAAACARTDLSHFNVGAIARGVSGNWYFGANMEFLGATMQQTVHAEQSAISHAWLRGEKGLAAVTVNYTPCGHCRQFMNELNSGLDLRIHLPGRAPHTLRDYLPDAFGPKDLEIKTLLMDEQDHGFTLTGDTLTQAAITAANKSHMPYSHSPSGVALECKDGRIFTGSYAENAAFNPTLPPLQGALNLLSLNGYDYADIQRAILAEKGDAALIQWDATAATLKALGCHNIDRVLLG.

2 CMP/dCMP-type deaminase domains span residues 48-168 and 186-294; these read DEDA…FGPK and LTGD…VLLG. Residue 89-91 participates in substrate binding; sequence NME. His102 contacts Zn(2+). The Proton donor role is filled by Glu104. Residues Cys129 and Cys132 each contribute to the Zn(2+) site.

It belongs to the cytidine and deoxycytidylate deaminase family. Homodimer. It depends on Zn(2+) as a cofactor.

It catalyses the reaction cytidine + H2O + H(+) = uridine + NH4(+). The catalysed reaction is 2'-deoxycytidine + H2O + H(+) = 2'-deoxyuridine + NH4(+). This enzyme scavenges exogenous and endogenous cytidine and 2'-deoxycytidine for UMP synthesis. This is Cytidine deaminase from Salmonella choleraesuis (strain SC-B67).